The chain runs to 207 residues: Large ribosomal subunit protein uL4 (207 aa).

The interval 49–78 (HAVKNRSAVSGGGRKPWRQKGTGRARQGSI) is disordered.

The protein belongs to the universal ribosomal protein uL4 family. In terms of assembly, part of the 50S ribosomal subunit.

One of the primary rRNA binding proteins, this protein initially binds near the 5'-end of the 23S rRNA. It is important during the early stages of 50S assembly. It makes multiple contacts with different domains of the 23S rRNA in the assembled 50S subunit and ribosome. Its function is as follows. Forms part of the polypeptide exit tunnel. This is Large ribosomal subunit protein uL4 from Streptococcus pyogenes serotype M49 (strain NZ131).